Here is a 614-residue protein sequence, read N- to C-terminus: Putative Na(+)/H(+) antiporter YjbQ (614 aa).

The next 13 helical transmembrane spans lie at 3-23, 32-52, 57-77, 107-127, 130-150, 163-183, 193-213, 225-244, 248-267, 282-302, 307-327, 338-358, and 368-388; these read HTSV…PILL, VVVA…NLVV, WLQT…GLEI, IFVG…LAGF, NAFL…VPTL, IILL…AVFS, MWLL…GRVF, GTIQ…LVAL, LGAE…SLLS, GFLI…WTLF, ILIM…IPVM, IFAS…AATI, and NMSG…PICF. The region spanning 401 to 519 is the RCK N-terminal domain; it reads KKTITFIGAN…EQGISIFSIL (119 aa). The 82-residue stretch at 533 to 614 folds into the RCK C-terminal domain; it reads PGVMKLLTNQ…VTDLKKTLEG (82 aa).

The protein belongs to the monovalent cation:proton antiporter 2 (CPA2) transporter (TC 2.A.37) family.

Its subcellular location is the cell membrane. Binds cyclic di-AMP (c-di-AMP), which may regulate the transporter activity. In terms of biological role, probable Na(+)/H(+) antiporter. This is Putative Na(+)/H(+) antiporter YjbQ from Bacillus subtilis (strain 168).